The sequence spans 271 residues: Probable septum site-determining protein MinC (271 aa).

Positions 106-125 (RRAPSPKAADDAPAQPEEPR) are disordered. Low complexity predominate over residues 110–119 (SPKAADDAPA).

Belongs to the MinC family. As to quaternary structure, interacts with MinD and FtsZ.

Its function is as follows. Cell division inhibitor that blocks the formation of polar Z ring septums. Rapidly oscillates between the poles of the cell to destabilize FtsZ filaments that have formed before they mature into polar Z rings. Prevents FtsZ polymerization. This is Probable septum site-determining protein MinC from Burkholderia thailandensis (strain ATCC 700388 / DSM 13276 / CCUG 48851 / CIP 106301 / E264).